Reading from the N-terminus, the 330-residue chain is GTPase Obg (330 aa).

Residues 1-159 (MHFIDEVKIY…MWIHLSLKLL (159 aa)) form the Obg domain. An OBG-type G domain is found at 160-327 (SDVGLVGLPN…IVKLALETIK (168 aa)). GTP contacts are provided by residues 166-173 (GLPNAGKS), 191-195 (FTTLV), 212-215 (DIPG), 279-282 (NKCD), and 308-310 (STC). Mg(2+) contacts are provided by Ser173 and Thr193.

The protein belongs to the TRAFAC class OBG-HflX-like GTPase superfamily. OBG GTPase family. As to quaternary structure, monomer. The cofactor is Mg(2+).

Its subcellular location is the cytoplasm. In terms of biological role, an essential GTPase which binds GTP, GDP and possibly (p)ppGpp with moderate affinity, with high nucleotide exchange rates and a fairly low GTP hydrolysis rate. Plays a role in control of the cell cycle, stress response, ribosome biogenesis and in those bacteria that undergo differentiation, in morphogenesis control. This is GTPase Obg from Rickettsia conorii (strain ATCC VR-613 / Malish 7).